A 145-amino-acid chain; its full sequence is 3-dehydroquinate dehydratase (145 aa).

Residue Y22 is the Proton acceptor of the active site. The substrate site is built by N71, H77, and D84. H97 (proton donor) is an active-site residue. Substrate-binding positions include 98-99 and R108; that span reads LS.

The protein belongs to the type-II 3-dehydroquinase family. As to quaternary structure, homododecamer.

The enzyme catalyses 3-dehydroquinate = 3-dehydroshikimate + H2O. It functions in the pathway metabolic intermediate biosynthesis; chorismate biosynthesis; chorismate from D-erythrose 4-phosphate and phosphoenolpyruvate: step 3/7. Catalyzes a trans-dehydration via an enolate intermediate. This Francisella philomiragia subsp. philomiragia (strain ATCC 25017 / CCUG 19701 / FSC 153 / O#319-036) protein is 3-dehydroquinate dehydratase.